The chain runs to 317 residues: Glycine--tRNA ligase alpha subunit (317 aa).

The protein belongs to the class-II aminoacyl-tRNA synthetase family. In terms of assembly, tetramer of two alpha and two beta subunits.

It localises to the cytoplasm. It carries out the reaction tRNA(Gly) + glycine + ATP = glycyl-tRNA(Gly) + AMP + diphosphate. This chain is Glycine--tRNA ligase alpha subunit, found in Pseudomonas fluorescens (strain ATCC BAA-477 / NRRL B-23932 / Pf-5).